The sequence spans 724 residues: Propionyl-CoA carboxylase alpha chain, mitochondrial (724 aa).

The N-terminal 48 residues, 1–48, are a transit peptide targeting the mitochondrion; the sequence is MAGQWVRTVALLAARRHWRRSSQQQLLGTLKHAPVYSYQCLVVSRSLS. Residues 58-505 form the Biotin carboxylation domain; that stretch reads TFDKILIANR…STKFLSDVYP (448 aa). An N6-acetyllysine; alternate modification is found at K61. N6-succinyllysine; alternate is present on K61. K115 is subject to N6-succinyllysine. An N6-acetyllysine; alternate modification is found at K146. An N6-succinyllysine; alternate modification is found at K146. The residue at position 150 (K150) is an N6-acetyllysine. K173 serves as a coordination point for ATP. Positions 177–374 constitute an ATP-grasp domain; sequence KLLAKRAKVN…LVQEMILVAK (198 aa). At K184 the chain carries N6-succinyllysine. Position 196 is an N6-acetyllysine; alternate (K196). At K196 the chain carries N6-succinyllysine; alternate. ATP is bound by residues 205–266, E257, and N292; that span reads AREI…PRHI. Position 248 is a phosphoserine (S248). K258 carries the post-translational modification N6-succinyllysine. Position 324 is an N6-acetyllysine; alternate (K324). At K324 the chain carries N6-succinyllysine; alternate. Mg(2+) contacts are provided by E332, E345, and N347. Mn(2+)-binding residues include E332, E345, and N347. Residue R349 is part of the active site. Residues K381 and K403 each carry the N6-succinyllysine modification. Residue F405 participates in biotin binding. K492 carries the post-translational modification N6-acetyllysine. 4 positions are modified to N6-succinyllysine: K498, K509, K554, and K644. The region spanning 645–724 is the Biotinyl-binding domain; that stretch reads FMLEKVPKDT…GEGDLLVELE (80 aa). K690 carries the post-translational modification N6-biotinyllysine; by HLCS.

As to quaternary structure, the holoenzyme is a dodecamer composed of 6 PCCA/alpha subunits and 6 PCCB/beta subunits. Interacts (via the biotin carboxylation domain) with SIRT4. Interacts with SIRT3 and SIRT5. It depends on Mg(2+) as a cofactor. Mn(2+) serves as cofactor. Biotin is required as a cofactor. Post-translationally, acetylated. The biotin cofactor is covalently attached to the C-terminal biotinyl-binding domain and is required for the catalytic activity. Biotinylation is catalyzed by HLCS.

It localises to the mitochondrion matrix. It catalyses the reaction propanoyl-CoA + hydrogencarbonate + ATP = (S)-methylmalonyl-CoA + ADP + phosphate + H(+). It carries out the reaction butanoyl-CoA + hydrogencarbonate + ATP = (2S)-ethylmalonyl-CoA + ADP + phosphate + H(+). Its pathway is metabolic intermediate metabolism; propanoyl-CoA degradation; succinyl-CoA from propanoyl-CoA: step 1/3. This is one of the 2 subunits of the biotin-dependent propionyl-CoA carboxylase (PCC), a mitochondrial enzyme involved in the catabolism of odd chain fatty acids, branched-chain amino acids isoleucine, threonine, methionine, and valine and other metabolites. Propionyl-CoA carboxylase catalyzes the carboxylation of propionyl-CoA/propanoyl-CoA to D-methylmalonyl-CoA/(S)-methylmalonyl-CoA. Within the holoenzyme, the alpha subunit catalyzes the ATP-dependent carboxylation of the biotin carried by the biotin carboxyl carrier (BCC) domain, while the beta subunit then transfers the carboxyl group from carboxylated biotin to propionyl-CoA. Propionyl-CoA carboxylase also significantly acts on butyryl-CoA/butanoyl-CoA, which is converted to ethylmalonyl-CoA/(2S)-ethylmalonyl-CoA. Other alternative minor substrates include (2E)-butenoyl-CoA/crotonoyl-CoA. This chain is Propionyl-CoA carboxylase alpha chain, mitochondrial, found in Mus musculus (Mouse).